A 241-amino-acid polypeptide reads, in one-letter code: RAD9, HUS1, RAD1-interacting nuclear orphan protein 1 (241 aa).

Residues 1 to 10 (MPPRKKRRQA) show a composition bias toward basic residues. Residues 1–27 (MPPRKKRRQAAQKPQLLFHQQPLEAPK) form a disordered region. An RAD1-binding motif motif is present at residues 56-62 (SWVSPQF). Disordered regions lie at residues 68 to 134 (SWFP…PLVP) and 157 to 204 (IPPD…LVTD). Basic residues predominate over residues 72 to 87 (GKRKHHHRDHARRSSR). Residues 100 to 110 (ETPQSSASSAT) show a composition bias toward polar residues. The D-box motif lies at 129–136 (GRPLVPML). The short motif at 177–181 (LRENS) is the KEN box element. Over residues 181–193 (SLPSCSLHTSTPK) the composition is skewed to polar residues.

Interacts (when phosphorylated by PLK1) with POLQ; promoting POLQ recruitment to DNA damage sites. Interacts with RAD1; interaction is direct and promotes association with the 9-1-1 (RAD9-RAD1-HUS1) complex. Interacts with RAD18. Interacts with TOPBP1. Interacts with UBE2N. Phosphorylated by PLK1, promoting interaction with polymerase theta (POLQ). Post-translationally, ubiquitinated and degraded by the APC/C complex upon mitotic exit.

Its subcellular location is the nucleus. It is found in the chromosome. Functionally, involved in microhomology-mediated end-joining (MMEJ) DNA repair by promoting recruitment of polymerase theta (POLQ) to DNA damage sites during mitosis. MMEJ is an alternative non-homologous end-joining (NHEJ) machinery that takes place during mitosis to repair double-strand breaks in DNA that originate in S-phase. Accumulates in M-phase; following phosphorylation by PLK1, interacts with POLQ, enabling its recruitment to double-strand breaks for subsequent repair. Also involved in the DNA damage response (DDR) signaling in response to genotoxic stresses such as ionizing radiation (IR) during the S phase. Recruited to sites of DNA damage through interaction with the 9-1-1 cell-cycle checkpoint response complex and TOPBP1 in a ATR-dependent manner. Required for the progression of the G1 to S phase transition. Plays a role in the stimulation of CHEK1 phosphorylation. This Bos taurus (Bovine) protein is RAD9, HUS1, RAD1-interacting nuclear orphan protein 1 (RHNO1).